A 254-amino-acid polypeptide reads, in one-letter code: Type III pantothenate kinase (254 aa).

6 to 13 (DVGNTNIV) contacts ATP. Residue 107 to 110 (GADR) coordinates substrate. The active-site Proton acceptor is Asp-109. K(+) is bound at residue Asp-129. Thr-132 contacts ATP. Thr-184 contacts substrate.

Belongs to the type III pantothenate kinase family. As to quaternary structure, homodimer. The cofactor is NH4(+). K(+) is required as a cofactor.

It is found in the cytoplasm. It catalyses the reaction (R)-pantothenate + ATP = (R)-4'-phosphopantothenate + ADP + H(+). It participates in cofactor biosynthesis; coenzyme A biosynthesis; CoA from (R)-pantothenate: step 1/5. In terms of biological role, catalyzes the phosphorylation of pantothenate (Pan), the first step in CoA biosynthesis. This chain is Type III pantothenate kinase, found in Exiguobacterium sp. (strain ATCC BAA-1283 / AT1b).